Consider the following 454-residue polypeptide: UPF0210 protein Ppro_0613 (454 aa).

The protein belongs to the UPF0210 family. As to quaternary structure, homodimer.

The protein is UPF0210 protein Ppro_0613 of Pelobacter propionicus (strain DSM 2379 / NBRC 103807 / OttBd1).